A 628-amino-acid chain; its full sequence is Chaperone protein HtpG (628 aa).

Residues 1–337 (MSEKKYTFET…SADLPLNVSR (337 aa)) are a; substrate-binding. A b region spans residues 338-554 (EILQHNKVID…DYGMSLHMQK (217 aa)). The segment at 555–628 (MMEEAGQSFM…FVKLVNKYIR (74 aa)) is c.

The protein belongs to the heat shock protein 90 family. In terms of assembly, homodimer.

It localises to the cytoplasm. Molecular chaperone. Has ATPase activity. The chain is Chaperone protein HtpG from Francisella tularensis subsp. holarctica (strain FTNF002-00 / FTA).